The chain runs to 242 residues: MRELVEIIKGIGIEGAKEVEEKVDRQFYALQYLFRHQDPEMFIKLVIANSLVSYQLTGRGEDWWWEFARYFSGREVDSIWKAYGEFLPKSKNNRRLIEAKLNRIRKVEGFLSTLTLKDLEGYYKNMKMLWKALIKIMGSREDSKTIVFTVKMFGYASRIAFSRFIPYPMEIPIPEDLRIKSVTSKLTQEKPTKFWMKIGQESGVPPLHIDSLIWPLLGNADLTPLDIELRNKLMKLTELLGL.

3 residues coordinate 8-oxoguanine: Gln-26, Ser-53, and Trp-64. Positions 120–184 (EGYYKNMKML…EDLRIKSVTS (65 aa)) are helix-hairpin-helix. Catalysis depends on Lys-144, which acts as the Schiff-base intermediate with DNA. 8-oxoguanine is bound by residues Phe-148 and Pro-174. Residue Asp-176 is part of the active site. 8-oxoguanine contacts are provided by Asp-210 and Trp-214.

The protein belongs to the archaeal N-glycosylase/DNA lyase (AGOG) family.

It carries out the reaction 2'-deoxyribonucleotide-(2'-deoxyribose 5'-phosphate)-2'-deoxyribonucleotide-DNA = a 3'-end 2'-deoxyribonucleotide-(2,3-dehydro-2,3-deoxyribose 5'-phosphate)-DNA + a 5'-end 5'-phospho-2'-deoxyribonucleoside-DNA + H(+). Functionally, DNA repair enzyme that is part of the base excision repair (BER) pathway; protects from oxidative damage by removing the major product of DNA oxidation, 8-oxoguanine (GO), from single- and double-stranded DNA substrates. The chain is N-glycosylase/DNA lyase from Pyrococcus furiosus (strain ATCC 43587 / DSM 3638 / JCM 8422 / Vc1).